The following is a 1387-amino-acid chain: MKKEVGDACRLEDIVTNLYRLETVKQINYHQYVPSKADNQWSIQAELFLRRKNPKVLAALFSRELWCFSINDDPLPELNLELNNESESPQPERKGHFTPEFSKPHLPTPYAIFMKALRRMIYVNLTLSSNETIVPFGNSCIFQESYTFSTKILHFDPHLFENGDLTVAICSKDLGLSKLNAESLKHEVAVYLAPSGIRVYLPSTDLKKCYVSPPKNAQMFLKTLFVSHGINLIDVDGLKWVKLIPNANHLNGFTPTISHYLDEPKGNNFVIWPACLCFVQTASDVQTPQYTAFSRSPQLELDDCFDMIDGFIQLKLTSAYRTPGTSAGMGTVTGHNPLSTGGIFTDQFQGFNKHSANNSNNVSSTGENGKFSPEYSNDPNVTPLRDNKTSRQNFPTESYSSNGFITTPIINENITPTVDDIITETPSVKPQNDLWNEKKDVINSTSNINSKDASVGSSERKVELETAFESPAQNISIEEHEHVEFDKDLFGEDSDEDVSTRNKNEELVSVKEITDEMFDLAEDDDEADGSTSNSLKFDRPDTIESIDTDEKKTRTKRTYLDIPVDVITIEKTPTLYEDPGAPLPIETPKDRKKSIFAPLNFNPIFESNVDNKYKNGGKFSVNSNTNDEPIQFGISTSNISSSEDDDSDFSPADFNNNGPSAGKGLSYDPRDNDIPMIESSTYEPIAKDSLPELINPPSSSKDDSVASYNTIGTLMEKPVKSNLDAIWKPALSKSERADLPNQTINGVINDCNNSSNSNPTTYFENTPSLGPDTLYDNSKPRSSSANFLSTVEIDPKSEQTIQTAEQEQSESSRILPYLLRHMPLFSLPDVFLCQNPSLPPGKDFEDILEILTDQIVFNNDMFSDDRATESQFKGIKDCSVGTISDTMNQLFGNFSKLHGNEIIEEVFYLPEPSVFVKKSEDTIKIKSSSCYFTEYLNLKPNRGVKNFRALVLTTEAKNDCMSFVSQMSQTYSNHELGFCELTKLTNDDNKGLIYLKNFNQDTLLLLSAQIVSFCSTALSNIKNIPLLIFLPINKLSLTECISMILKFHVIRKEFKSKLPKADILLRLVNIDFLKNPLTPITAYTSLCMAIYNSLPPKSTKVTSLTNDLPKQIEFRTLKNASLSIHYDNYIHLAYLRSIDREWLCAAWSDTKGVESFVKTWYVGNSRTRFEQVCNDIWKITLQLASKNFGNVCLVLTRLDSVLPDDELIHWRRLSVATKDLHLAVVCVGDNTKLTLFDEDKTYPTFKNLFRTKSNPQTGISNSIDDLEIINIDEEVHGLIFSNPLQLANSQHRCAIKSGALIRFAKSEGDNFIDKFEVNLLNCPHADSSTLLKEILKQYRNLAGLNPWFGVSYGKDNFIPWHVVAVKNVMNSIVHVKSSFEKETHIID.

Disordered regions lie at residues 81 to 102, 354 to 400, and 620 to 676; these read ELNNESESPQPERKGHFTPEFS, HSAN…ESYS, and SVNS…DIPM. Composition is skewed to polar residues over residues 354–367 and 390–400; these read HSANNSNNVSSTGE and SRQNFPTESYS.

Belongs to the Mediator complex subunit 13 family. As to quaternary structure, component of the SRB8-11 complex, which itself associates with the Mediator complex.

The protein localises to the nucleus. Functionally, component of the SRB8-11 complex. The SRB8-11 complex is a regulatory module of the Mediator complex which is itself involved in regulation of basal and activated RNA polymerase II-dependent transcription. The SRB8-11 complex may be involved in the transcriptional repression of a subset of genes regulated by Mediator. It may inhibit the association of the Mediator complex with RNA polymerase II to form the holoenzyme complex. The polypeptide is Mediator of RNA polymerase II transcription subunit 13 (SSN2) (Kluyveromyces lactis (strain ATCC 8585 / CBS 2359 / DSM 70799 / NBRC 1267 / NRRL Y-1140 / WM37) (Yeast)).